The sequence spans 425 residues: Serine--tRNA ligase (425 aa).

Position 229 to 231 (229 to 231 (TSE)) interacts with L-serine. Residues 259–261 (RKE) and Val-275 each bind ATP. L-serine is bound at residue Glu-282. 349 to 352 (EVTS) is an ATP binding site. Position 384 (Thr-384) interacts with L-serine.

The protein belongs to the class-II aminoacyl-tRNA synthetase family. Type-1 seryl-tRNA synthetase subfamily. As to quaternary structure, homodimer. The tRNA molecule binds across the dimer.

The protein resides in the cytoplasm. It carries out the reaction tRNA(Ser) + L-serine + ATP = L-seryl-tRNA(Ser) + AMP + diphosphate + H(+). The catalysed reaction is tRNA(Sec) + L-serine + ATP = L-seryl-tRNA(Sec) + AMP + diphosphate + H(+). It functions in the pathway aminoacyl-tRNA biosynthesis; selenocysteinyl-tRNA(Sec) biosynthesis; L-seryl-tRNA(Sec) from L-serine and tRNA(Sec): step 1/1. Its function is as follows. Catalyzes the attachment of serine to tRNA(Ser). Is also able to aminoacylate tRNA(Sec) with serine, to form the misacylated tRNA L-seryl-tRNA(Sec), which will be further converted into selenocysteinyl-tRNA(Sec). In Borreliella burgdorferi (strain ATCC 35210 / DSM 4680 / CIP 102532 / B31) (Borrelia burgdorferi), this protein is Serine--tRNA ligase.